Consider the following 598-residue polypeptide: Aspartate--tRNA ligase (598 aa).

Glu175 contacts L-aspartate. The segment at 199–202 is aspartate; it reads QLFK. Position 221 (Arg221) interacts with L-aspartate. Residues 221–223 and Gln230 each bind ATP; that span reads RDE. Residue His450 participates in L-aspartate binding. Position 486 (Glu486) interacts with ATP. Residue Arg493 participates in L-aspartate binding. 538–541 is a binding site for ATP; that stretch reads GLDR.

This sequence belongs to the class-II aminoacyl-tRNA synthetase family. Type 1 subfamily. In terms of assembly, homodimer.

The protein localises to the cytoplasm. It carries out the reaction tRNA(Asp) + L-aspartate + ATP = L-aspartyl-tRNA(Asp) + AMP + diphosphate. Its function is as follows. Catalyzes the attachment of L-aspartate to tRNA(Asp) in a two-step reaction: L-aspartate is first activated by ATP to form Asp-AMP and then transferred to the acceptor end of tRNA(Asp). The sequence is that of Aspartate--tRNA ligase from Lactiplantibacillus plantarum (strain ATCC BAA-793 / NCIMB 8826 / WCFS1) (Lactobacillus plantarum).